A 174-amino-acid polypeptide reads, in one-letter code: Protein TM_1551 (174 aa).

In terms of domain architecture, AMMECR1 spans 2-174 (IGEHPYVKWA…IYRFTVERYK (173 aa)).

The protein is Protein TM_1551 of Thermotoga maritima (strain ATCC 43589 / DSM 3109 / JCM 10099 / NBRC 100826 / MSB8).